Reading from the N-terminus, the 525-residue chain is Protein nucleotidyltransferase YdiU (525 aa).

Residues Gly107, Gly109, Arg110, Lys129, Asp141, Gly142, Arg192, and Arg199 each contribute to the ATP site. The active-site Proton acceptor is Asp268. Residues Asn269 and Asp278 each coordinate Mg(2+). Position 278 (Asp278) interacts with ATP.

The protein belongs to the SELO family. Mg(2+) is required as a cofactor. Mn(2+) serves as cofactor.

It carries out the reaction L-seryl-[protein] + ATP = 3-O-(5'-adenylyl)-L-seryl-[protein] + diphosphate. It catalyses the reaction L-threonyl-[protein] + ATP = 3-O-(5'-adenylyl)-L-threonyl-[protein] + diphosphate. The enzyme catalyses L-tyrosyl-[protein] + ATP = O-(5'-adenylyl)-L-tyrosyl-[protein] + diphosphate. The catalysed reaction is L-histidyl-[protein] + UTP = N(tele)-(5'-uridylyl)-L-histidyl-[protein] + diphosphate. It carries out the reaction L-seryl-[protein] + UTP = O-(5'-uridylyl)-L-seryl-[protein] + diphosphate. It catalyses the reaction L-tyrosyl-[protein] + UTP = O-(5'-uridylyl)-L-tyrosyl-[protein] + diphosphate. Functionally, nucleotidyltransferase involved in the post-translational modification of proteins. It can catalyze the addition of adenosine monophosphate (AMP) or uridine monophosphate (UMP) to a protein, resulting in modifications known as AMPylation and UMPylation. In Ralstonia nicotianae (strain ATCC BAA-1114 / GMI1000) (Ralstonia solanacearum), this protein is Protein nucleotidyltransferase YdiU.